The primary structure comprises 592 residues: A-type ATP synthase subunit A (592 aa).

233–240 (GPFGSGKT) provides a ligand contact to ATP.

This sequence belongs to the ATPase alpha/beta chains family. Has multiple subunits with at least A(3), B(3), C, D, E, F, H, I and proteolipid K(x).

It localises to the cell membrane. The catalysed reaction is ATP + H2O + 4 H(+)(in) = ADP + phosphate + 5 H(+)(out). Component of the A-type ATP synthase that produces ATP from ADP in the presence of a proton gradient across the membrane. The A chain is the catalytic subunit. The polypeptide is A-type ATP synthase subunit A (Saccharolobus islandicus (strain Y.G.57.14 / Yellowstone #1) (Sulfolobus islandicus)).